The sequence spans 231 residues: NDR1/HIN1-like protein 3 (231 aa).

The chain crosses the membrane as a helical span at residues 47 to 67 (VIFNILITIAVLLGIAALIIW). N-linked (GlcNAc...) asparagine glycosylation is found at Asn-102, Asn-135, Asn-145, and Asn-215.

As to quaternary structure, may form oligomers or be a component of larger protein complex in plasma membranes. In terms of processing, glycosylated. In terms of tissue distribution, expressed in roots, young and senescing leaves, cauline leaves, stems and siliques.

It is found in the cell membrane. Its function is as follows. Confers resistance to Pseudomonas syringae pv. tomato DC3000 (Pst DC3000). The protein is NDR1/HIN1-like protein 3 of Arabidopsis thaliana (Mouse-ear cress).